The primary structure comprises 449 residues: Methylenetetrahydrofolate--tRNA-(uracil-5-)-methyltransferase TrmFO (449 aa).

An FAD-binding site is contributed by 9–14 (GGGMAG).

This sequence belongs to the MnmG family. TrmFO subfamily. FAD is required as a cofactor.

It localises to the cytoplasm. The catalysed reaction is uridine(54) in tRNA + (6R)-5,10-methylene-5,6,7,8-tetrahydrofolate + NADH + H(+) = 5-methyluridine(54) in tRNA + (6S)-5,6,7,8-tetrahydrofolate + NAD(+). The enzyme catalyses uridine(54) in tRNA + (6R)-5,10-methylene-5,6,7,8-tetrahydrofolate + NADPH + H(+) = 5-methyluridine(54) in tRNA + (6S)-5,6,7,8-tetrahydrofolate + NADP(+). Its function is as follows. Catalyzes the folate-dependent formation of 5-methyl-uridine at position 54 (M-5-U54) in all tRNAs. The chain is Methylenetetrahydrofolate--tRNA-(uracil-5-)-methyltransferase TrmFO from Ruegeria pomeroyi (strain ATCC 700808 / DSM 15171 / DSS-3) (Silicibacter pomeroyi).